We begin with the raw amino-acid sequence, 135 residues long: Protein Wnt-7c (135 aa).

2 cysteine pairs are disulfide-bonded: C3/C17 and C5/C12. S9 carries the O-palmitoleoyl serine; by PORCN lipid modification. N-linked (GlcNAc...) asparagine glycosylation is found at N62, N85, and N98. Cystine bridges form between C81/C112, C97/C107, and C134/C135.

The protein belongs to the Wnt family. Post-translationally, palmitoleoylation is required for efficient binding to frizzled receptors. Depalmitoleoylation leads to Wnt signaling pathway inhibition.

The protein localises to the secreted. Its subcellular location is the extracellular space. It localises to the extracellular matrix. Its function is as follows. Ligand for members of the frizzled family of seven transmembrane receptors. Probable developmental protein. May be a signaling molecule which affects the development of discrete regions of tissues. Is likely to signal over only few cell diameters. This Xenopus laevis (African clawed frog) protein is Protein Wnt-7c (wnt7c).